The chain runs to 281 residues: UPF0273 protein PAE3143 (281 aa).

The KaiC domain occupies 4–248; sequence PRVRSYVPGL…YIKITGSSVR (245 aa). 31–38 provides a ligand contact to ATP; that stretch reads GGPGTGKS.

The protein belongs to the UPF0273 family.

The chain is UPF0273 protein PAE3143 from Pyrobaculum aerophilum (strain ATCC 51768 / DSM 7523 / JCM 9630 / CIP 104966 / NBRC 100827 / IM2).